The chain runs to 2073 residues: Dedicator of cytokinesis protein 11 (2073 aa).

At S12 the chain carries Phosphoserine. At T16 the chain carries Phosphothreonine. S23 and S161 each carry phosphoserine. The PH domain maps to 165-272 (GVIKQGWLHK…WLITLKKIIQ (108 aa)). Y248 bears the Phosphotyrosine mark. Residues S306, S440, and S445 each carry the phosphoserine modification. In terms of domain architecture, C2 DOCK-type spans 640-818 (KNHLYVYPLQ…PLLKIKSHLE (179 aa)). A disordered region spans residues 1226 to 1267 (FQNGHGIKREDSRGSLIPEGATGFPDQGNTGENTRQSSTRSS). A phosphoserine mark is found at S1237 and S1240. The DOCKER domain occupies 1609-2036 (KSYASTPELR…LSDIIHEQIL (428 aa)).

This sequence belongs to the DOCK family. As to quaternary structure, interacts with CDC42.

Guanine nucleotide-exchange factor (GEF) that activates CDC42 by exchanging bound GDP for free GTP. Required for marginal zone (MZ) B-cell development, is associated with early bone marrow B-cell development, MZ B-cell formation, MZ B-cell number and marginal metallophilic macrophages morphology. Facilitates filopodia formation through the activation of CDC42. This is Dedicator of cytokinesis protein 11 from Homo sapiens (Human).